The chain runs to 202 residues: dITP/XTP pyrophosphatase (202 aa).

7-12 (SRNEAK) is a substrate binding site. Asp68 serves as the catalytic Proton acceptor. A Mg(2+)-binding site is contributed by Asp68. Substrate contacts are provided by residues Ser69, 156–159 (FGYD), Lys179, and 184–185 (HR).

The protein belongs to the HAM1 NTPase family. In terms of assembly, homodimer. The cofactor is Mg(2+).

It carries out the reaction XTP + H2O = XMP + diphosphate + H(+). The enzyme catalyses dITP + H2O = dIMP + diphosphate + H(+). It catalyses the reaction ITP + H2O = IMP + diphosphate + H(+). Its function is as follows. Pyrophosphatase that catalyzes the hydrolysis of nucleoside triphosphates to their monophosphate derivatives, with a high preference for the non-canonical purine nucleotides XTP (xanthosine triphosphate), dITP (deoxyinosine triphosphate) and ITP. Seems to function as a house-cleaning enzyme that removes non-canonical purine nucleotides from the nucleotide pool, thus preventing their incorporation into DNA/RNA and avoiding chromosomal lesions. The protein is dITP/XTP pyrophosphatase of Frankia alni (strain DSM 45986 / CECT 9034 / ACN14a).